We begin with the raw amino-acid sequence, 529 residues long: Listeriolysin O (529 aa).

An N-terminal signal peptide occupies residues 1–24; that stretch reads MKKIMLVFITLILVSLPIAQQTEA. Positions 35 to 54 are disordered; that stretch reads SISSMAPPASPPASPKTPIE. 4 beta stranded membrane-spanning segments follow: residues 214–227, 234–243, 312–321, and 329–341; these read ESQL…AFKA, VNFGAISEGK, STKVKAAFDA, and SGDV…IKNS. The Conserved undecapeptide motif lies at 483–493; it reads ECTGLAWEWWR. The Cholesterol binding signature appears at 515 to 516; it reads TL.

Belongs to the cholesterol-dependent cytolysin family. Homooligomeric pore complex of 35 to 50 subunits; when inserted in the host membrane.

Its subcellular location is the secreted. It is found in the host membrane. The protein localises to the host cell membrane. With respect to regulation, activity of listeriolysin O is regulated on multiple levels. It should be high in the phagosome, thereby allowing escape of the bacteria from the phagosomal compartment. Then, once inside the host cytosol, the activity must be controlled to prevent lysis of the host plasma membrane and loss of the intracellular environment. Its function is as follows. A cholesterol-dependent toxin that causes cytolysis by forming pores in cholesterol containing host membranes. After binding to target membranes, the protein undergoes a major conformation change, leading to its insertion in the host membrane and formation of an oligomeric pore complex. Cholesterol is required for binding to host membranes, membrane insertion and pore formation; cholesterol binding is mediated by a Thr-Leu pair in the C-terminus. Acts as a major virulence factor required for the escape of bacteria from phagosomal vacuoles and entry into the host cytosol. Can be reversibly inactivated by oxidation. The sequence is that of Listeriolysin O (hly) from Listeria monocytogenes serotype 1/2a (strain 08-5578).